The following is a 404-amino-acid chain: Coenzyme F(430) synthetase (404 aa).

112–117 (GVKGKT) lines the ATP pocket.

It belongs to the MurCDEF family.

The enzyme catalyses 15,17(3)-seco-F430-17(3)-acid + ATP = coenzyme F430 + ADP + phosphate. In terms of biological role, involved in the biosynthesis of the unique nickel-containing tetrapyrrole coenzyme F430, the prosthetic group of methyl-coenzyme M reductase (MCR), which plays a key role in methanogenesis and anaerobic methane oxidation. Catalyzes the activation the g-propionate side chain of 15,17(3)-seco-F430-17(3)-acid (seco-F430) for intramolecular C-C bond formation to yield the carbocyclic F ring of coenzyme F430. The sequence is that of Coenzyme F(430) synthetase from Methanocaldococcus jannaschii (strain ATCC 43067 / DSM 2661 / JAL-1 / JCM 10045 / NBRC 100440) (Methanococcus jannaschii).